Here is a 571-residue protein sequence, read N- to C-terminus: Adenine deaminase (571 aa).

The protein belongs to the metallo-dependent hydrolases superfamily. Adenine deaminase family. Mn(2+) serves as cofactor.

The catalysed reaction is adenine + H2O + H(+) = hypoxanthine + NH4(+). This chain is Adenine deaminase, found in Dehalococcoides mccartyi (strain ATCC BAA-2100 / JCM 16839 / KCTC 5957 / BAV1).